The following is a 506-amino-acid chain: MALKRSSSMKTQLVDAIQLEEVEMEEEITTTSNNNNPVEPAQVKEPKCYTVEEAVESIGFGCFHILLFVIMGSANIVEAMEIMLLAVVSPEIRCEWHLEDWQVALVSTMVFFGFMVCGVLCGYIADKYGRWKVVFGGFVWASYFSFLTSFSTSYGWFIFLRCMVGCGVAATSQGFVLKTEFIPAKYRAYLLPLASIFWMMGSILIIVLGMTVVPTMGWRWMIRFSVIPSLVLIGLFMFIPESARFQVSAGNIQGAMSTLKRIAKMNNGVLPEGELREPEVTERGNAVTLISSAFRRTSLLLWYSWFVASFSYYGSVLSSSELLEKNLLCVTDPDLEHQIKHIQEETLCYCIPFNSDDYQTLLISCLGEVALIPLNIILLNIVGRKYSMVILLLLSAFFFMLVNICTTMLGFTILLFLLRSVVSMNFNVVYIYTAEVYPTSVRSIGMGFCTSFSRIGGMIAPFIAQVLMSKSVILALSPFATACIICAIGVFFLPIETRGRALLQDA.

10 consecutive transmembrane segments (helical) span residues 57–77, 104–124, 133–153, 190–210, 220–240, 297–317, 362–382, 397–417, 444–464, and 472–492; these read SIGF…ANIV, ALVS…CGYI, VVFG…FSTS, LLPL…VLGM, WMIR…MFIP, TSLL…GSVL, LISC…LNIV, FFFM…LLFL, IGMG…PFIA, and VILA…GVFF.

The protein belongs to the major facilitator superfamily.

Its subcellular location is the membrane. The sequence is that of Putative transporter SVOPL (svopl) from Danio rerio (Zebrafish).